A 268-amino-acid polypeptide reads, in one-letter code: Tryptophan synthase alpha chain (268 aa).

Catalysis depends on proton acceptor residues Glu49 and Asp60.

Belongs to the TrpA family. In terms of assembly, tetramer of two alpha and two beta chains.

It carries out the reaction (1S,2R)-1-C-(indol-3-yl)glycerol 3-phosphate + L-serine = D-glyceraldehyde 3-phosphate + L-tryptophan + H2O. It participates in amino-acid biosynthesis; L-tryptophan biosynthesis; L-tryptophan from chorismate: step 5/5. The alpha subunit is responsible for the aldol cleavage of indoleglycerol phosphate to indole and glyceraldehyde 3-phosphate. The sequence is that of Tryptophan synthase alpha chain from Pectobacterium atrosepticum (strain SCRI 1043 / ATCC BAA-672) (Erwinia carotovora subsp. atroseptica).